The primary structure comprises 138 residues: MERTFAMIKPDGVRRGLTPEILARIHNKGYRVVGLKQMMMPRETAEQHYGEHRERPFFGELVDFITGGPVVAIALEGENAIAGWRAMMGATNPANAAPGTIRADFATSTGENVTHGSDSPESAERELALFFGDGELLS.

K9, F57, R85, T91, R102, and N112 together coordinate ATP. H115 serves as the catalytic Pros-phosphohistidine intermediate.

The protein belongs to the NDK family. As to quaternary structure, homotetramer. The cofactor is Mg(2+).

The protein resides in the cytoplasm. It catalyses the reaction a 2'-deoxyribonucleoside 5'-diphosphate + ATP = a 2'-deoxyribonucleoside 5'-triphosphate + ADP. The enzyme catalyses a ribonucleoside 5'-diphosphate + ATP = a ribonucleoside 5'-triphosphate + ADP. Functionally, major role in the synthesis of nucleoside triphosphates other than ATP. The ATP gamma phosphate is transferred to the NDP beta phosphate via a ping-pong mechanism, using a phosphorylated active-site intermediate. The protein is Nucleoside diphosphate kinase of Deinococcus radiodurans (strain ATCC 13939 / DSM 20539 / JCM 16871 / CCUG 27074 / LMG 4051 / NBRC 15346 / NCIMB 9279 / VKM B-1422 / R1).